An 89-amino-acid chain; its full sequence is LYR motif-containing protein 4 (89 aa).

Residues 44–71 adopt a coiled-coil conformation; that stretch reads KNIADSEKIEELLNKAKANLEVIQRQGT.

Belongs to the complex I LYR family.

The protein resides in the mitochondrion. Its subcellular location is the nucleus. Its pathway is cofactor biosynthesis; iron-sulfur cluster biosynthesis. In terms of biological role, required for nuclear and mitochondrial iron-sulfur protein biosynthesis. This is LYR motif-containing protein 4 (LYRM4) from Taeniopygia guttata (Zebra finch).